The sequence spans 539 residues: MAFTAISLFLAALGVINTAFAQSAVIGPVTDLDIINAEVNLDGFPRQAVLAGGTFPGPLIKGNKGDNFRINVHDFLYNETMDVTTTIHWHGIFQRHTNWADGPAFVTQCPIAPGNSFLYNFTVPNQAGTFWYHSHEGLQYCDGLRGPFVVYDPEDPHRDLYDVDDESTVITLADWYHEAASLIVPPADPDSVLINGRGRQANDTTSPLAVINVEYGKRYRIRLISVSCDPYFNFTIDGHNFTIIEADGENTDPLPGVDQIQIFAAQRYSFILDANQPIDNYWIRVIPEQVGANGTAATPPGLAVLHYLGAPPFDPKANASQVPISVNPLLEQNLHALGATGVPDLDPSCAECNITLDFTFNTPLFFVNGVTYKSPTVPVLLQILNGSFTAQDLMPEGSVYTLPRNKTIQINMPGGVLGIPHPLHLHGHSFSVIRSANSDETNLYNPVRRDTVSIGTNGSFVAIRFTTDNPGPWFLHCHIDFHLAAGFAVVMAEDPMDVPGYVKPIPPAWDKLCPIYDALPANEQILQPEAANLSTYPQK.

The signal sequence occupies residues M1–A21. 2 consecutive Plastocyanin-like domains span residues A37–E154 and E166–G309. N78 is a glycosylation site (N-linked (GlcNAc...) asparagine). Cu cation-binding residues include H88 and H90. 2 disulfide bridges follow: C109–C513 and C141–C228. N120 carries an N-linked (GlcNAc...) asparagine glycan. Residues H133 and H135 each contribute to the Cu cation site. Residues N202, N233, N240, N293, N318, N353, N385, and N405 are each glycosylated (N-linked (GlcNAc...) asparagine). The 122-residue stretch at S374–P495 folds into the Plastocyanin-like 3 domain. Positions 421, 424, and 426 each coordinate Cu cation. A glycan (N-linked (GlcNAc...) asparagine) is linked at N457. Residues H476, C477, H478, and H482 each coordinate Cu cation. N-linked (GlcNAc...) asparagine glycosylation occurs at N532.

The protein belongs to the multicopper oxidase family. Cu cation is required as a cofactor.

Its subcellular location is the secreted. It catalyses the reaction 4 hydroquinone + O2 = 4 benzosemiquinone + 2 H2O. With respect to regulation, inhibited by chloride ions. Inhibited by citrate. Inhibited by oxalate. Activated by acetate. In terms of biological role, in vitro, has activity towards 2,2'-azino-bis(3-ethylbenzthiazoline-6-sulfonic acid) (ABTS), 2,6-dimethoxy-phenol, and guaiacol. Although brown rot fungi preferentially degrade hemicellulose and cellulose, the enzyme may contribute to generating small amounts of lignin breakdown products required for catalytic reactions. The polypeptide is Laccase-1 (Fomitopsis schrenkii (Brown rot fungus)).